The chain runs to 673 residues: Probable serine/threonine-protein kinase SCO3848 (673 aa).

One can recognise a Protein kinase domain in the interval 11–277 (YELGPVLGRG…EMRVDIEACL (267 aa)). ATP is bound by residues 17 to 25 (LGRGGMAEV) and Lys-40. The active-site Proton acceptor is Asp-138. A disordered region spans residues 302-345 (DQPTTALRSDGGGGATTMLPPMNPDDGGYGYDERPDRRRQQPRK). PASTA domains follow at residues 379-445 (GNDK…VVST), 446-511 (GAPK…EVAK), 512-580 (AEEK…VVGK), and 581-649 (AVEK…MTVP). Positions 472–500 (FEVETKQTESSQDEGTILSQNPDPGKELE) are disordered. Residues 479-493 (TESSQDEGTILSQNP) show a composition bias toward polar residues. Disordered regions lie at residues 613–641 (AQGSPGDDNAKVFASNPQPGSEVDDPAAT) and 653–673 (GNGNGGNGNGGAIAGLPGFGD).

Belongs to the protein kinase superfamily. Ser/Thr protein kinase family.

It carries out the reaction L-seryl-[protein] + ATP = O-phospho-L-seryl-[protein] + ADP + H(+). It catalyses the reaction L-threonyl-[protein] + ATP = O-phospho-L-threonyl-[protein] + ADP + H(+). The sequence is that of Probable serine/threonine-protein kinase SCO3848 from Streptomyces coelicolor (strain ATCC BAA-471 / A3(2) / M145).